We begin with the raw amino-acid sequence, 181 residues long: Acireductone dioxygenase (181 aa).

4 residues coordinate Fe(2+): His97, His99, Glu103, and His141. Residues His97, His99, Glu103, and His141 each coordinate Ni(2+).

Belongs to the acireductone dioxygenase (ARD) family. As to quaternary structure, monomer. It depends on Fe(2+) as a cofactor. Ni(2+) serves as cofactor.

The catalysed reaction is 1,2-dihydroxy-5-(methylsulfanyl)pent-1-en-3-one + O2 = 3-(methylsulfanyl)propanoate + CO + formate + 2 H(+). The enzyme catalyses 1,2-dihydroxy-5-(methylsulfanyl)pent-1-en-3-one + O2 = 4-methylsulfanyl-2-oxobutanoate + formate + 2 H(+). The protein operates within amino-acid biosynthesis; L-methionine biosynthesis via salvage pathway; L-methionine from S-methyl-5-thio-alpha-D-ribose 1-phosphate: step 5/6. Functionally, catalyzes 2 different reactions between oxygen and the acireductone 1,2-dihydroxy-3-keto-5-methylthiopentene (DHK-MTPene) depending upon the metal bound in the active site. Fe-containing acireductone dioxygenase (Fe-ARD) produces formate and 2-keto-4-methylthiobutyrate (KMTB), the alpha-ketoacid precursor of methionine in the methionine recycle pathway. Ni-containing acireductone dioxygenase (Ni-ARD) produces methylthiopropionate, carbon monoxide and formate, and does not lie on the methionine recycle pathway. The protein is Acireductone dioxygenase of Pseudomonas paraeruginosa (strain DSM 24068 / PA7) (Pseudomonas aeruginosa (strain PA7)).